Here is a 365-residue protein sequence, read N- to C-terminus: Endophilin-B1 (365 aa).

An N-acetylmethionine modification is found at Met1. The interval 1–30 (MNIMDFNVKKLAADAGTFLSRAVQFTEEKL) is membrane-binding amphipathic helix. Residues 1–37 (MNIMDFNVKKLAADAGTFLSRAVQFTEEKLGQAEKTE) form a required for membrane binding region. One can recognise a BAR domain in the interval 27 to 261 (EEKLGQAEKT…LGSFPSNYHS (235 aa)). Thr145 bears the Phosphothreonine; by CDK5 mark. Residues 155-195 (YKTIAKERKLLQNKRLDLDAAKTRLKKAKAAETRASSEQEL) adopt a coiled-coil conformation. The SH3 domain maps to 305–365 (GGSRRARVLY…VPITYLELLN (61 aa)).

The protein belongs to the endophilin family. Homodimer, and heterodimer with SH3GLB2. Binds BAX; induction of apoptosis augments BAX binding. Binds DNM1, HTT, AMPH, BIN1 and ARFGAP1. Interacts with UVRAG; UVRAG bridges the interaction to BECN1 indicative for an association with the PI3K complex II (PI3KC3-C2). In terms of processing, phosphorylated at Thr-145 by CDK5; this phosphorylation is required for autophagy induction in starved neurons and facilitates homodimerization.

It localises to the cytoplasm. The protein resides in the golgi apparatus membrane. It is found in the mitochondrion outer membrane. The protein localises to the cytoplasmic vesicle. Its subcellular location is the autophagosome membrane. It localises to the midbody. Its function is as follows. May be required for normal outer mitochondrial membrane dynamics. Required for coatomer-mediated retrograde transport in certain cells. May recruit other proteins to membranes with high curvature. May promote membrane fusion. Involved in activation of caspase-dependent apoptosis by promoting BAX/BAK1 activation. Involved in caspase-independent apoptosis during nutrition starvation and involved in the regulation of autophagy. Activates lipid kinase activity of PIK3C3 during autophagy probably by associating with the PI3K complex II (PI3KC3-C2). Associated with PI3KC3-C2 during autophagy may regulate the trafficking of ATG9A from the Golgi complex to the peripheral cytoplasm for the formation of autophagosomes by inducing Golgi membrane tubulation and fragmentation. Involved in regulation of degradative endocytic trafficking and cytokinesis, probably in the context of PI3KC3-C2. The sequence is that of Endophilin-B1 (SH3GLB1) from Bos taurus (Bovine).